Here is a 245-residue protein sequence, read N- to C-terminus: 1-(5-phosphoribosyl)-5-[(5-phosphoribosylamino)methylideneamino] imidazole-4-carboxamide isomerase (245 aa).

The Proton acceptor role is filled by Asp11. Asp132 (proton donor) is an active-site residue.

The protein belongs to the HisA/HisF family.

The protein resides in the cytoplasm. It carries out the reaction 1-(5-phospho-beta-D-ribosyl)-5-[(5-phospho-beta-D-ribosylamino)methylideneamino]imidazole-4-carboxamide = 5-[(5-phospho-1-deoxy-D-ribulos-1-ylimino)methylamino]-1-(5-phospho-beta-D-ribosyl)imidazole-4-carboxamide. It functions in the pathway amino-acid biosynthesis; L-histidine biosynthesis; L-histidine from 5-phospho-alpha-D-ribose 1-diphosphate: step 4/9. In Bacillus licheniformis (strain ATCC 14580 / DSM 13 / JCM 2505 / CCUG 7422 / NBRC 12200 / NCIMB 9375 / NCTC 10341 / NRRL NRS-1264 / Gibson 46), this protein is 1-(5-phosphoribosyl)-5-[(5-phosphoribosylamino)methylideneamino] imidazole-4-carboxamide isomerase.